The sequence spans 497 residues: Ammonium transporter 1 (497 aa).

Residues 1-32 lie on the Extracellular side of the membrane; it reads MSSTTDATPTPSGVNGGDSMTVNLNQFYNNGD. The helical transmembrane segment at 33–53 threads the bilayer; sequence VAWILTSTALVFIMIPGVGFF. Residues 54–63 are Cytoplasmic-facing; the sequence is YSGLARRRSA. A helical transmembrane segment spans residues 64–84; that stretch reads ISMLFLSMMSVAIVAFQWFFW. The Extracellular segment spans residues 85–122; the sequence is GYSLTFSHEGGPYIGSLANFGLRQTLGRPSSGASSVPD. A helical membrane pass occupies residues 123 to 143; that stretch reads ILFCVFQGMFAAITPALAIGA. Residues 144–150 are Cytoplasmic-facing; it reads AADRGRM. A helical transmembrane segment spans residues 151–171; it reads FPCMVFMFLWTSIVYDPIAFW. Residues 172-187 lie on the Extracellular side of the membrane; the sequence is TWNPNGWLNKLGSYDF. The helical transmembrane segment at 188–208 threads the bilayer; it reads AGGSPVHISSGMAALAYSIVI. Residues 209-223 are Cytoplasmic-facing; the sequence is GKRCDHGTTKYRPHN. A helical membrane pass occupies residues 224 to 244; that stretch reads VPHVVLGTVFLWFGWFGFNGG. Residues 245 to 253 are Extracellular-facing; sequence SSAAANMRG. A helical membrane pass occupies residues 254 to 274; sequence VMAVVVTHLAASVGGIVWCVI. Over 275–281 the chain is Cytoplasmic; the sequence is DFAKNRH. The chain crosses the membrane as a helical span at residues 282 to 302; that stretch reads WSVVGFCEGAVAGLVAITPGS. A topological domain (extracellular) is located at residue glycine 303. The chain crosses the membrane as a helical span at residues 304-324; the sequence is FVPPWAAVVIGALGAVFCYAA. Residues 325 to 338 are Cytoplasmic-facing; it reads TYLKKIIRVDDALD. The helical transmembrane segment at 339-359 threads the bilayer; sequence IFAEHGVGGMVGNILTALFAA. The Extracellular portion of the chain corresponds to 360–394; the sequence is DYIEALDGSGTAYTGGWITHHYIQLGYQLADTVSC. Residues 395-415 form a helical membrane-spanning segment; sequence AAYSFAVSCALLFVMNYIPGL. The Cytoplasmic segment spans residues 416 to 497; sequence SLRVSREDEV…AESEAQAPAI (82 aa). Positions 440 to 497 are disordered; the sequence is YKDSTDEPPPITTSGVQYTSPTVSDSASNEKEQEHRAQNEAQKEEEYRAESEAQAPAI. The span at 451 to 466 shows a compositional bias: polar residues; it reads TTSGVQYTSPTVSDSA. The span at 467–490 shows a compositional bias: basic and acidic residues; it reads SNEKEQEHRAQNEAQKEEEYRAES.

This sequence belongs to the ammonia transporter channel (TC 1.A.11.2) family.

The protein resides in the membrane. Transporter for ammonium to use as a nitrogen source. Under ammonium limitation acts as an ammonium sensor, generating a signal that leads to pseudohyphal growth. In Schizosaccharomyces pombe (strain 972 / ATCC 24843) (Fission yeast), this protein is Ammonium transporter 1 (amt1).